Here is a 332-residue protein sequence, read N- to C-terminus: MTVTVSQVLRPRGPQIERLTENRAKVVLEPLGRGYAHTLGNALRRVLLSSIPGFAITEVEIDGVLHEYTTVEGLQEDVLEVLLNLKDVAIRIHSGDTATLSLFKQGAGVVTAADIKTDHNVEIINDGHVICHLTKDTTINMRLKIERGFGYQPAVVRRRPDDENRTIGRLILDASFSPVRRVAYVVEAARVEQRTDLDKLIIDIETNGTIDAEEALRTAADILTDQLSVFGDFTHRDRGTVKPASSGVDPVLLRPIDDLELTVRSANCLKAESIYYIGDLIQKTEVELLKTPNLGKKSLTEIKEVLGQRGLGLGVKLENWPPPGVSQYGMLG.

The alpha N-terminal domain (alpha-NTD) stretch occupies residues 1-234; that stretch reads MTVTVSQVLR…DQLSVFGDFT (234 aa). The segment at 248-332 is alpha C-terminal domain (alpha-CTD); that stretch reads VDPVLLRPID…PGVSQYGMLG (85 aa).

This sequence belongs to the RNA polymerase alpha chain family. In terms of assembly, homodimer. The RNAP catalytic core consists of 2 alpha, 1 beta, 1 beta' and 1 omega subunit. When a sigma factor is associated with the core the holoenzyme is formed, which can initiate transcription.

The enzyme catalyses RNA(n) + a ribonucleoside 5'-triphosphate = RNA(n+1) + diphosphate. Its function is as follows. DNA-dependent RNA polymerase catalyzes the transcription of DNA into RNA using the four ribonucleoside triphosphates as substrates. This Xylella fastidiosa (strain M23) protein is DNA-directed RNA polymerase subunit alpha.